Consider the following 500-residue polypeptide: Protein dcd1B (500 aa).

An N-terminal signal peptide occupies residues 1-20 (MNLIKLFIICCLLISITVKS). 6 N-linked (GlcNAc...) asparagine glycosylation sites follow: N284, N331, N441, N459, N474, and N475. The tract at residues 464–500 (FSEQPPLPPPNNSSSSDSNSNSNSDSSSSSDSNSNSN) is disordered. A compositionally biased stretch (low complexity) spans 475–500 (NSSSSDSNSNSNSDSSSSSDSNSNSN).

Its subcellular location is the secreted. This Dictyostelium discoideum (Social amoeba) protein is Protein dcd1B (dcd1B).